The primary structure comprises 325 residues: Lipoyl synthase (325 aa).

The tract at residues 1-33 (MATVIDTLKARGSEDRAARHPEKQNRPDTPVLR) is disordered. A compositionally biased stretch (basic and acidic residues) spans 8 to 33 (LKARGSEDRAARHPEKQNRPDTPVLR). Residues Cys-64, Cys-69, Cys-75, Cys-90, Cys-94, Cys-97, and Ser-303 each coordinate [4Fe-4S] cluster. The 217-residue stretch at 76 to 292 (WSQKHATMMI…EAIARAKGFL (217 aa)) folds into the Radical SAM core domain.

Belongs to the radical SAM superfamily. Lipoyl synthase family. [4Fe-4S] cluster serves as cofactor.

It is found in the cytoplasm. The catalysed reaction is [[Fe-S] cluster scaffold protein carrying a second [4Fe-4S](2+) cluster] + N(6)-octanoyl-L-lysyl-[protein] + 2 oxidized [2Fe-2S]-[ferredoxin] + 2 S-adenosyl-L-methionine + 4 H(+) = [[Fe-S] cluster scaffold protein] + N(6)-[(R)-dihydrolipoyl]-L-lysyl-[protein] + 4 Fe(3+) + 2 hydrogen sulfide + 2 5'-deoxyadenosine + 2 L-methionine + 2 reduced [2Fe-2S]-[ferredoxin]. Its pathway is protein modification; protein lipoylation via endogenous pathway; protein N(6)-(lipoyl)lysine from octanoyl-[acyl-carrier-protein]: step 2/2. Functionally, catalyzes the radical-mediated insertion of two sulfur atoms into the C-6 and C-8 positions of the octanoyl moiety bound to the lipoyl domains of lipoate-dependent enzymes, thereby converting the octanoylated domains into lipoylated derivatives. The protein is Lipoyl synthase of Caulobacter vibrioides (strain ATCC 19089 / CIP 103742 / CB 15) (Caulobacter crescentus).